A 123-amino-acid polypeptide reads, in one-letter code: UPF0102 protein VFMJ11_2324 (123 aa).

Belongs to the UPF0102 family.

The polypeptide is UPF0102 protein VFMJ11_2324 (Aliivibrio fischeri (strain MJ11) (Vibrio fischeri)).